Reading from the N-terminus, the 206-residue chain is MARYIGPKCKLSRREGTDLFLKSGVTPFEKKCKSEQIPGVHGQRRQRLSDYGLQLREKQKVRRMYGVLEKQFRNYYKEAARLKGATGELLLQLLESRLDNVVYRMGFGSTRSEARQLVSHKAIAVNGRTVNVASYQVKPGDVVSVREKAKNQARIQNALGIAANRGDVAWIDVDSKKMEGTFKAVPERGDLSADINENLIVELYSK.

One can recognise an S4 RNA-binding domain in the interval 96-157; the sequence is SRLDNVVYRM…KAKNQARIQN (62 aa).

Belongs to the universal ribosomal protein uS4 family. As to quaternary structure, part of the 30S ribosomal subunit. Contacts protein S5. The interaction surface between S4 and S5 is involved in control of translational fidelity.

Functionally, one of the primary rRNA binding proteins, it binds directly to 16S rRNA where it nucleates assembly of the body of the 30S subunit. With S5 and S12 plays an important role in translational accuracy. The sequence is that of Small ribosomal subunit protein uS4 from Chromohalobacter salexigens (strain ATCC BAA-138 / DSM 3043 / CIP 106854 / NCIMB 13768 / 1H11).